The following is a 723-amino-acid chain: Protein Aster-A (723 aa).

Low complexity predominate over residues 1–18 (MFDTTPHSGRSSPSSSPS). A disordered region spans residues 1–63 (MFDTTPHSGR…SGVSGTLSTQ (63 aa)). The segment covering 28 to 38 (PSRPPSAPEPE) has biased composition (pro residues). The 68-residue stretch at 93-160 (EDFRKLFSKL…KEVTCLKKEK (68 aa)) folds into the GRAM domain. The disordered stretch occupies residues 257–337 (SPSGAADRSQ…DGPTSNLGPL (81 aa)). Phosphoserine occurs at positions 265, 269, and 273. The segment covering 302-314 (DSQLDASSSQTVT) has biased composition (polar residues). Residues 370–541 (SGRLLINSVF…ELAKAEKVSL (172 aa)) enclose the VASt domain. Ser-418 is subject to Phosphoserine. Positions 562–601 (LSWRGHRDGPQHPDPDPCTQTSMHTSGSLSSRFSEPSVDQ) are disordered. The span at 566 to 576 (GHRDGPQHPDP) shows a compositional bias: basic and acidic residues. Over residues 579 to 595 (CTQTSMHTSGSLSSRFS) the composition is skewed to polar residues. Residues 610-630 (ALVLISIVLIVLIALNALLFY) traverse the membrane as a helical segment.

The protein localises to the endoplasmic reticulum membrane. It localises to the cell membrane. It is found in the cytoplasmic vesicle. The protein resides in the autophagosome. Functionally, cholesterol transporter that mediates non-vesicular transport of cholesterol from the plasma membrane (PM) to the endoplasmic reticulum (ER). Contains unique domains for binding cholesterol and the PM, thereby serving as a molecular bridge for the transfer of cholesterol from the PM to the ER. Plays a crucial role in cholesterol homeostasis and has the unique ability to localize to the PM based on the level of membrane cholesterol. In lipid-poor conditions localizes to the ER membrane and in response to excess cholesterol in the PM is recruited to the endoplasmic reticulum-plasma membrane contact sites (EPCS) which is mediated by the GRAM domain. At the EPCS, the sterol-binding VASt/ASTER domain binds to the cholesterol in the PM and facilitates its transfer from the PM to ER. May play a role in tumor progression. Plays a role in autophagy regulation and is required for biogenesis of the autophagosome. This function in autophagy requires its cholesterol-transfer activity. The protein is Protein Aster-A of Rattus norvegicus (Rat).